A 115-amino-acid chain; its full sequence is Phosphoribosyl-ATP pyrophosphatase (115 aa).

This sequence belongs to the PRA-PH family.

The protein localises to the cytoplasm. It catalyses the reaction 1-(5-phospho-beta-D-ribosyl)-ATP + H2O = 1-(5-phospho-beta-D-ribosyl)-5'-AMP + diphosphate + H(+). Its pathway is amino-acid biosynthesis; L-histidine biosynthesis; L-histidine from 5-phospho-alpha-D-ribose 1-diphosphate: step 2/9. The protein is Phosphoribosyl-ATP pyrophosphatase of Bordetella parapertussis (strain 12822 / ATCC BAA-587 / NCTC 13253).